The following is a 138-amino-acid chain: Cytochrome b5 (138 aa).

The Cytochrome b5 heme-binding domain occupies 14–90 (GRYYRLEEVQ…SETFIIGELH (77 aa)). H49 and H73 together coordinate heme. Residues 114-136 (SWSNWVIPAIAAIIVALMYRSYM) form a helical membrane-spanning segment.

This sequence belongs to the cytochrome b5 family.

It is found in the endoplasmic reticulum membrane. The protein localises to the microsome membrane. Its function is as follows. Cytochrome b5 is a membrane-bound hemoprotein functioning as an electron carrier for several membrane-bound oxygenases. The protein is Cytochrome b5 (CYB5A) of Gallus gallus (Chicken).